The primary structure comprises 224 residues: Orotate phosphoribosyltransferase (224 aa).

Residue K29 coordinates 5-phospho-alpha-D-ribose 1-diphosphate. Position 37–38 (37–38 (FF)) interacts with orotate. 5-phospho-alpha-D-ribose 1-diphosphate is bound by residues 75–76 (YK), R105, K106, K109, H111, and 130–138 (DDVITAGTS). Residues T134 and R162 each contribute to the orotate site.

This sequence belongs to the purine/pyrimidine phosphoribosyltransferase family. PyrE subfamily. In terms of assembly, homodimer. Requires Mg(2+) as cofactor.

The catalysed reaction is orotidine 5'-phosphate + diphosphate = orotate + 5-phospho-alpha-D-ribose 1-diphosphate. The protein operates within pyrimidine metabolism; UMP biosynthesis via de novo pathway; UMP from orotate: step 1/2. Functionally, catalyzes the transfer of a ribosyl phosphate group from 5-phosphoribose 1-diphosphate to orotate, leading to the formation of orotidine monophosphate (OMP). This chain is Orotate phosphoribosyltransferase, found in Bordetella parapertussis (strain 12822 / ATCC BAA-587 / NCTC 13253).